We begin with the raw amino-acid sequence, 240 residues long: ATP synthase subunit a 1 (240 aa).

The next 5 membrane-spanning stretches (helical) occupy residues 23 to 43 (GQVL…SVLA), 82 to 102 (VPFI…GALF), 120 to 140 (DINT…YAGF), 186 to 206 (LVVA…VMLL), and 207 to 227 (GLFT…AYIH).

The protein belongs to the ATPase A chain family. In terms of assembly, F-type ATPases have 2 components, CF(1) - the catalytic core - and CF(0) - the membrane proton channel. CF(1) has five subunits: alpha(3), beta(3), gamma(1), delta(1), epsilon(1). CF(0) has four main subunits: a, b, b' and c.

It is found in the cellular thylakoid membrane. Functionally, key component of the proton channel; it plays a direct role in the translocation of protons across the membrane. This chain is ATP synthase subunit a 1, found in Acaryochloris marina (strain MBIC 11017).